Reading from the N-terminus, the 144-residue chain is Large ribosomal subunit protein uL15 (144 aa).

The tract at residues 1–53 is disordered; that stretch reads MRLNTLSPAEGSKHASKRLGRGIGSGLGKTGGRGHKGQKSRSGGGVRRGFEGG. Residues 21–31 are compositionally biased toward gly residues; sequence RGIGSGLGKTG.

It belongs to the universal ribosomal protein uL15 family. Part of the 50S ribosomal subunit.

Its function is as follows. Binds to the 23S rRNA. In Edwardsiella ictaluri (strain 93-146), this protein is Large ribosomal subunit protein uL15.